The chain runs to 155 residues: Ribosomal RNA large subunit methyltransferase H (155 aa).

Residues Leu-72, Gly-103, and 122 to 127 (LSALTL) contribute to the S-adenosyl-L-methionine site.

It belongs to the RNA methyltransferase RlmH family. As to quaternary structure, homodimer.

Its subcellular location is the cytoplasm. The catalysed reaction is pseudouridine(1915) in 23S rRNA + S-adenosyl-L-methionine = N(3)-methylpseudouridine(1915) in 23S rRNA + S-adenosyl-L-homocysteine + H(+). Functionally, specifically methylates the pseudouridine at position 1915 (m3Psi1915) in 23S rRNA. This Citrobacter koseri (strain ATCC BAA-895 / CDC 4225-83 / SGSC4696) protein is Ribosomal RNA large subunit methyltransferase H.